Consider the following 271-residue polypeptide: 3-methyl-2-oxobutanoate hydroxymethyltransferase (271 aa).

2 residues coordinate Mg(2+): Asp-53 and Asp-92. 3-methyl-2-oxobutanoate is bound by residues 53-54 (DS), Asp-92, and Lys-120. Glu-122 serves as a coordination point for Mg(2+). Glu-189 functions as the Proton acceptor in the catalytic mechanism.

The protein belongs to the PanB family. As to quaternary structure, homodecamer; pentamer of dimers. Requires Mg(2+) as cofactor.

It localises to the cytoplasm. The catalysed reaction is 3-methyl-2-oxobutanoate + (6R)-5,10-methylene-5,6,7,8-tetrahydrofolate + H2O = 2-dehydropantoate + (6S)-5,6,7,8-tetrahydrofolate. The protein operates within cofactor biosynthesis; (R)-pantothenate biosynthesis; (R)-pantoate from 3-methyl-2-oxobutanoate: step 1/2. Its function is as follows. Catalyzes the reversible reaction in which hydroxymethyl group from 5,10-methylenetetrahydrofolate is transferred onto alpha-ketoisovalerate to form ketopantoate. This is 3-methyl-2-oxobutanoate hydroxymethyltransferase from Paraburkholderia xenovorans (strain LB400).